The sequence spans 261 residues: Thioredoxin-like protein HCF164, chloroplastic (261 aa).

The N-terminal 40 residues, 1–40 (MARLVFSLNLPSSHGFNLSPRNLQSFFVTQTGAPRFRAVR), are a transit peptide targeting the chloroplast. The interval 39–91 (VRCKPNPESSETKQEKLVIDNGETSSASKEVESSSSVADSSSSSSSGFPESPN) is disordered. A compositionally biased stretch (low complexity) spans 63 to 84 (SSASKEVESSSSVADSSSSSSS). Positions 101–229 (VTVIAALSLF…LVENVNALAA (129 aa)) constitute a Thioredoxin domain. Catalysis depends on nucleophile residues Cys150 and Cys153. Cys150 and Cys153 are oxidised to a cystine.

The protein belongs to the thioredoxin family. As to quaternary structure, interacts in vitro with LTO1.

The protein localises to the plastid. It is found in the chloroplast thylakoid membrane. Its function is as follows. Thiol-disulfide oxidoreductase that participates in various redox reactions in the chloroplast. Mediates the reduction of PSI-N in the thylakoid lumen. May interact and probably reduce other target proteins of the thylakoid membrane, such as FTSH2, FTSH8, LHCB5, atpA, atpB, atpE, petA and petC. Involved in the biogenesis of the plastid cytochrome b6f complex. Reducing equivalents are provided by stromal M-type thioredoxins and probably transduced through the thylakoid membrane by CCDA. Possesses low insulin disulfide bonds reducing activity. The protein is Thioredoxin-like protein HCF164, chloroplastic of Arabidopsis thaliana (Mouse-ear cress).